A 466-amino-acid chain; its full sequence is GTPase Der (466 aa).

EngA-type G domains follow at residues Pro30 to Ser193 and Arg203 to Asp376. GTP-binding positions include Gly36 to Ser43, Asp83 to Trp87, Asn145 to Asp148, Gly209 to Ser216, Asp256 to Leu260, and Asn321 to Asp324. The KH-like domain occupies Thr377 to Glu459.

The protein belongs to the TRAFAC class TrmE-Era-EngA-EngB-Septin-like GTPase superfamily. EngA (Der) GTPase family. Associates with the 50S ribosomal subunit.

Its function is as follows. GTPase that plays an essential role in the late steps of ribosome biogenesis. In Mycobacterium avium (strain 104), this protein is GTPase Der.